Here is a 225-residue protein sequence, read N- to C-terminus: MAWLIMEEEEVDGIPVNEFGRLEIGFDYGFDFTGIVTPPVSTDYDVTLYAKLGLYCYNFQKGTNLKFVRWEKYNTSTGTAYIDNYITLEAMDPSCNSVFSFQTVFSAAGCYNQDTYHVQDWRVLACRPTCGKSVNEYFDRHEAMDPFYTGKMPKWLSDDALAFDNKKYYVVQESDLHENDWLLVFMEMVFLQEKSCVSSSDHKAIIRKTMDGVPEHMSLEIALVK.

This sequence belongs to the UPF0725 (EMB2204) family.

This Arabidopsis thaliana (Mouse-ear cress) protein is UPF0725 protein At5g63820.